We begin with the raw amino-acid sequence, 432 residues long: Interleukin-11 receptor subunit alpha-2 (432 aa).

The N-terminal stretch at 1–23 is a signal peptide; that stretch reads MSSSCSGLTRVLVAVATALVSSS. Residues 24–372 lie on the Extracellular side of the membrane; the sequence is SPCPQAWGPP…DPLEQVAVLA (349 aa). Residues 27–110 enclose the Ig-like C2-type domain; it reads PQAWGPPGVQ…SGGMVTLKLG (84 aa). 3 cysteine pairs are disulfide-bonded: Cys-48/Cys-94, Cys-120/Cys-130, and Cys-170/Cys-180. Fibronectin type-III domains are found at residues 112–219 and 220–317; these read PPAR…LRPD and PPQG…TPST. Residue Asn-127 is glycosylated (N-linked (GlcNAc...) asparagine). The disordered stretch occupies residues 151–170; the sequence is KTLPGAESQRESPSTGPWPC. Asn-194 carries an N-linked (GlcNAc...) asparagine glycan. Positions 304 to 308 match the WSXWS motif motif; it reads WSAWS. A helical membrane pass occupies residues 373-393; it reads SLGIFSCLGLAVGALALGLWL. At 394-432 the chain is on the cytoplasmic side; sequence RLRRSGKEGPQKPGLLAPMIPVEKLPGIPNLQRTPENFS.

It belongs to the type I cytokine receptor family. Type 3 subfamily. As to quaternary structure, on ligand binding, forms a multimer complex with IL6ST/gp130. Expression restricted to testis, lymph node and thymus. Highest level in testis.

The protein localises to the membrane. Functionally, receptor for interleukin-11. The receptor systems for IL6, LIF, OSM, CNTF, IL11 and CT1 can utilize IL6ST for initiating signal transmission. The IL11/IL11RA/IL6ST complex may be involved in the control of proliferation and/or differentiation of skeletogenic progenitor or other mesenchymal cells. In Mus musculus (Mouse), this protein is Interleukin-11 receptor subunit alpha-2 (Il11ra2).